The chain runs to 262 residues: MANPYERGPNPTDALLEASSGPFSVSEENVSRLSASGFGGGTIYYPRENNTYGAVAISPGYTGTEASIAWLGERIASHGFVVITIDTITTLDQPDSRAEQLNAALNHMINRASSTVRSRIDSSRLAVMGHSMGGGGTLRLASQRPDLKAAIPLTPWHLNKNWSSVTVPTLIIGADLDTIAPVATHAKPFYNSLPSSISKAYLELDGATHFAPNIPNKIIGKYSVAWLKRFVDNDTRYTQFLCPGPRDGLFGEVEEYRSTCPF.

Residue Tyr61 participates in poly(ethylene terephthalate) binding. Catalysis depends on Ser131, which acts as the Nucleophile. Residues Met132 and Trp156 each coordinate poly(ethylene terephthalate). Residues Asp177 and His209 each act as charge relay system in the active site. A disulfide bridge links Cys242 with Cys260.

This sequence belongs to the AB hydrolase superfamily.

It is found in the secreted. The protein resides in the periplasm. The enzyme catalyses (ethylene terephthalate)(n) + H2O = (ethylene terephthalate)(n-1) + 4-[(2-hydroxyethoxy)carbonyl]benzoate + H(+). It catalyses the reaction a butanoate ester + H2O = an aliphatic alcohol + butanoate + H(+). The catalysed reaction is an acetyl ester + H2O = an aliphatic alcohol + acetate + H(+). It carries out the reaction cutin + H2O = cutin monomers.. Its function is as follows. Catalyzes the hydrolysis of cutin, a polyester that forms the structure of plant cuticle. Shows esterase activity towards p-nitrophenol-linked aliphatic esters (pNP-aliphatic esters). Capable of degrading the plastic poly(ethylene terephthalate) (PET), the most abundant polyester plastic in the world. Capable of degrading the bioplastic poly(lactic acid) (PLLA). The protein is Cutinase 1 of Thermobifida cellulosilytica.